We begin with the raw amino-acid sequence, 260 residues long: Tetraspanin-14 (260 aa).

Residues 1-10 (MKSQSHKPWN) lie on the Cytoplasmic side of the membrane. The helical transmembrane segment at 11-31 (LVAGIFFPIITFFLSAPLVGH) threads the bilayer. At 32-54 (ALYLFCMRNDHVYYRDFQSTLPR) the chain is on the extracellular side. Residues 55-75 (VQTLVSVSLLALFLLSNIGMF) traverse the membrane as a helical segment. The Cytoplasmic portion of the chain corresponds to 76–80 (LRPRR). The helical transmembrane segment at 81-101 (LSYFLVIVFFIGFAYSGVYKM) threads the bilayer. Topologically, residues 102-260 (ESRRFSPTPM…FLSSLTSLFR (159 aa)) are extracellular. A glycan (N-linked (GlcNAc...) asparagine) is linked at Asn-182.

The protein belongs to the tetraspanin (TM4SF) family.

The protein resides in the membrane. Functionally, may be involved in the regulation of cell differentiation. This is Tetraspanin-14 (TET14) from Arabidopsis thaliana (Mouse-ear cress).